A 64-amino-acid chain; its full sequence is Small ribosomal subunit protein eS17 (64 aa).

Belongs to the eukaryotic ribosomal protein eS17 family.

The polypeptide is Small ribosomal subunit protein eS17 (Methanococcoides burtonii (strain DSM 6242 / NBRC 107633 / OCM 468 / ACE-M)).